Reading from the N-terminus, the 214-residue chain is Outer-membrane lipoprotein LolB (214 aa).

Positions 1–25 (MNNLKRFTKSIFSCIALSGLLFLGG) are cleaved as a signal peptide. Cys26 is lipidated: N-palmitoyl cysteine. Cys26 carries S-diacylglycerol cysteine lipidation.

This sequence belongs to the LolB family. In terms of assembly, monomer.

The protein localises to the cell outer membrane. Functionally, plays a critical role in the incorporation of lipoproteins in the outer membrane after they are released by the LolA protein. This chain is Outer-membrane lipoprotein LolB, found in Shewanella sp. (strain MR-7).